The following is a 935-amino-acid chain: Protein translocase subunit SecA (935 aa).

ATP is bound by residues Gln90, Gly108 to Thr112, and Asp504.

Belongs to the SecA family. Monomer and homodimer. Part of the essential Sec protein translocation apparatus which comprises SecA, SecYEG and auxiliary proteins SecDF. Other proteins may also be involved.

It is found in the cell inner membrane. The protein localises to the cellular thylakoid membrane. Its subcellular location is the cytoplasm. It catalyses the reaction ATP + H2O + cellular proteinSide 1 = ADP + phosphate + cellular proteinSide 2.. Part of the Sec protein translocase complex. Interacts with the SecYEG preprotein conducting channel. Has a central role in coupling the hydrolysis of ATP to the transfer of proteins into and across the cell membrane, serving as an ATP-driven molecular motor driving the stepwise translocation of polypeptide chains across the membrane. Its function is as follows. Probably participates in protein translocation into and across both the cytoplasmic and thylakoid membranes in cyanobacterial cells. This chain is Protein translocase subunit SecA, found in Gloeothece citriformis (strain PCC 7424) (Cyanothece sp. (strain PCC 7424)).